Consider the following 442-residue polypeptide: Trigger factor (442 aa).

Residues 163–248 (YDRVTINYCI…IIKIEKKQEL (86 aa)) form the PPIase FKBP-type domain.

This sequence belongs to the FKBP-type PPIase family. Tig subfamily.

Its subcellular location is the cytoplasm. The catalysed reaction is [protein]-peptidylproline (omega=180) = [protein]-peptidylproline (omega=0). Involved in protein export. Acts as a chaperone by maintaining the newly synthesized protein in an open conformation. Functions as a peptidyl-prolyl cis-trans isomerase. The chain is Trigger factor (tig) from Buchnera aphidicola subsp. Acyrthosiphon pisum (strain APS) (Acyrthosiphon pisum symbiotic bacterium).